The following is a 242-amino-acid chain: Uridylate kinase (242 aa).

Residue 11–14 (KLSG) coordinates ATP. Residues 19–24 (GEKGAG) are involved in allosteric activation by GTP. Gly53 is a UMP binding site. ATP contacts are provided by Gly54 and Arg58. UMP contacts are provided by residues Asp73 and 134–141 (IGSPYFST). 3 residues coordinate ATP: Asn162, Tyr168, and Asp171.

The protein belongs to the UMP kinase family. In terms of assembly, homohexamer.

The protein resides in the cytoplasm. The catalysed reaction is UMP + ATP = UDP + ADP. Its pathway is pyrimidine metabolism; CTP biosynthesis via de novo pathway; UDP from UMP (UMPK route): step 1/1. Its activity is regulated as follows. Allosterically activated by GTP. Inhibited by UTP. Functionally, catalyzes the reversible phosphorylation of UMP to UDP. The sequence is that of Uridylate kinase from Streptococcus pyogenes serotype M2 (strain MGAS10270).